Here is a 142-residue protein sequence, read N- to C-terminus: Hemoglobin subunit alpha (142 aa).

The residue at position 1 (Ser-1) is an N-acetylserine. A Globin domain is found at 1–142 (SLSDKDKAAV…VALALAERYR (142 aa)). Residue His-59 coordinates O2. His-88 lines the heme b pocket.

The protein belongs to the globin family. Heterotetramer of two alpha chains and two beta chains. In terms of tissue distribution, red blood cells.

Functionally, involved in oxygen transport from gills to the various peripheral tissues. The sequence is that of Hemoglobin subunit alpha (hba) from Gymnodraco acuticeps (Antarctic dragonfish).